Reading from the N-terminus, the 279-residue chain is Prephenate dehydratase (279 aa).

The 177-residue stretch at 2 to 178 (KIAYLGPRGS…NSTRFWLLGK (177 aa)) folds into the Prephenate dehydratase domain. In terms of domain architecture, ACT spans 194–270 (LALTLPDNLP…LGVKVRLLGN (77 aa)).

It catalyses the reaction prephenate + H(+) = 3-phenylpyruvate + CO2 + H2O. It participates in amino-acid biosynthesis; L-phenylalanine biosynthesis; phenylpyruvate from prephenate: step 1/1. This chain is Prephenate dehydratase (pheA), found in Lactococcus lactis subsp. lactis (strain IL1403) (Streptococcus lactis).